Consider the following 480-residue polypeptide: MSTYSLSETHKAMLEHSLVESDPQVAEIMKKEVQRQRESIILIASENVTSRAVFDALGSPMSNKYSEGLPGARYYGGNQHIDEIEVLCQNRALEAFHLDPKQWGVNVQCLSGSPANLQVYQAIMPVHGRLMGLDLPHGGHLSHGYQTPQRKISAVSTYFETMPYRVNIDTGLIDYDTLEKNAQLFRPKVLVAGTSAYCRLIDYERMRKIADSVGAYLVVDMAHISGLIASEVIPSPFLYADVVTTTTHKSLRGPRGAMIFFRRGVRSVDAKTGKETLYDLEDKINFSVFPGHQGGPHNHTITALAVALKQAASPEFKEYQQKVVANAKALEKKLKELGYKLVSDGTDSHMVLVDLRPIGVDGARVEFLLEQINITCNKNAVPGDKSALTPGGLRIGTPAMTSRGFGEADFEKVAVFVDEAVKLCKEIQASLPKEANKQKDFKAKIATSDIPRINELKQEIAAWSNTFPLPVEGWRYDAGL.

K249 carries the N6-(pyridoxal phosphate)lysine modification.

The protein belongs to the SHMT family. In terms of assembly, homotetramer. The cofactor is pyridoxal 5'-phosphate.

Its subcellular location is the cytoplasm. It carries out the reaction (6R)-5,10-methylene-5,6,7,8-tetrahydrofolate + glycine + H2O = (6S)-5,6,7,8-tetrahydrofolate + L-serine. It participates in one-carbon metabolism; tetrahydrofolate interconversion. Its function is as follows. Interconversion of serine and glycine. This chain is Serine hydroxymethyltransferase, cytosolic (for), found in Neurospora crassa (strain ATCC 24698 / 74-OR23-1A / CBS 708.71 / DSM 1257 / FGSC 987).